Reading from the N-terminus, the 553-residue chain is Undecaprenyl phosphate-alpha-4-amino-4-deoxy-L-arabinose arabinosyl transferase (553 aa).

11 consecutive transmembrane segments (helical) span residues 6 to 26 (ACKV…LLPL), 89 to 109 (FGSV…AMMM), 115 to 135 (IAFA…IGTY), 180 to 200 (FMTK…PIVI), 208 to 228 (IVCF…PWVI), 258 to 278 (IAPF…WLGL), 293 to 313 (NPEM…FSIA), 317 to 337 (LPTY…KFGV), 352 to 372 (GMVN…MEVV), 386 to 406 (WVLA…CFAL), and 410 to 430 (YWLL…HALP).

This sequence belongs to the glycosyltransferase 83 family.

The protein localises to the cell inner membrane. The enzyme catalyses 4-amino-4-deoxy-alpha-L-arabinopyranosyl di-trans,octa-cis-undecaprenyl phosphate + lipid IVA = lipid IIA + di-trans,octa-cis-undecaprenyl phosphate.. It functions in the pathway lipopolysaccharide metabolism; 4-amino-4-deoxy-beta-L-arabinose-lipid A biosynthesis. Its function is as follows. Catalyzes the transfer of the L-Ara4N moiety of the glycolipid undecaprenyl phosphate-alpha-L-Ara4N to lipid A. The modified arabinose is attached to lipid A and is required for resistance to polymyxin and cationic antimicrobial peptides. The protein is Undecaprenyl phosphate-alpha-4-amino-4-deoxy-L-arabinose arabinosyl transferase (arnT) of Photorhabdus laumondii subsp. laumondii (strain DSM 15139 / CIP 105565 / TT01) (Photorhabdus luminescens subsp. laumondii).